Reading from the N-terminus, the 953-residue chain is MTAAENVCYTLINVPMDSEPPSEISLKNDLEKGDVKSKTEALKKVIIMILNGEKLPGLLMTIIRFVLPLQDHTIKKLLLVFWEIVPKTTPDGRLLHEMILVCDAYRKDLQHPNEFIRGSTLRFLCKLKEAELLEPLMPAIRACLEHRHSYVRRNAVLAIYTIYRNFEHLIPDAPELIHDFLVNEKDASCKRNAFMMLIHADQDRALDYLSTCIDQVQTFGDILQLVIVELIYKVCHANPSERARFIRCIYNLLQSSSPAVKYEAAGTLVTLSSAPTAIKAAAQCYIDLIIKESDNNVKLIVLDRLIELKEHPAHERVLQDLVMDILRVLSTPDLEVRKKTLQLALDLVSSRNVEELVIVLKKEVIKTNNVSEHEDTDKYRQLLVRTLHSCSVRFPDMAANVIPVLMEFLSDNNEAAAADVLEFVREAIQRFDNLRMLIVEKMLEVFHAIKSVKIYRGALWILGEYCSTKEDIQSVMTEIRRSLGEIPIVESEIKKEAGELKPEEEITVGPVQKLVTEMGTYATQSALSSSRPTKKEEDRPPLRGFLLDGDFFVAASLATTLTKIALRYVALVQEKKKQNSFVAEAMLLMATILHLGKSSLPKKPITDDDVDRISLCLKVLSECSPLMNDIFNKECRQSLSHMLSAKLEEEKLSQKKESEKRNVTVQPDDPISFMQLTAKNEMNCKEDQFQLSLLAAMGNTQRKEAADPLASKLNKVTQLTGFSDPVYAEAYVHVNQYDIVLDVLVVNQTSDTLQNCTLELATLGDLKLVEKPSPLTLAPHDFANIKANVKVASTENGIIFGNIVYDVSGAASDRNCVVLSDIHIDIMDYIQPATCTDAEFRQMWAEFEWENKVTVNTNMVDLNDYLQHILKSTNMKCLTPEKALSGYCGFMAANLYARSIFGEDALANVSIEKPIHQGPDAAVTGHIRIRAKSQGMALSLGDKINLSQKKTSI.

N-acetylthreonine is present on threonine 2. HEAT repeat units lie at residues 96–131 (HEMILVCDAYRKDLQHPNEFIRGSTLRFLCKLKEAE), 132–168 (LLEPLMPAIRACLEHRHSYVRRNAVLAIYTIYRNFEH), 240–276 (SERARFIRCIYNLLQSSSPAVKYEAAGTLVTLSSAPT), 277–314 (AIKAAAQCYIDLIIKESDNNVKLIVLDRLIELKEHPAH), 316–353 (RVLQDLVMDILRVLSTPDLEVRKKTLQLALDLVSSRNV), and 396–433 (DMAANVIPVLMEFLSDNNEAAAADVLEFVREAIQRFDN). Position 494 is an N6-acetyllysine (lysine 494).

Oligomeric complex that consists of at least the alpha, beta, beta', gamma, delta, epsilon and zeta subunits. Interacts with SCYL1. Interacts with COPG1. Interacts (via trunk domain) with ARF1 (via switch I region); the interaction is direct. Interacts with KCNK2/TREK (via N-terminus); this interaction increases the channel-mediated whole cell currents and promotes plasma membrane expression of KCNK2/TREK. Interacts with anthrax lethal factor (LF); this interaction may facilitate endosomal vesicle membrane translocation of LF and its release from the lumen of endosomal vesicles to external milieu. Interacts with CAPN8 and PRKCE. Interacts with ARF1 (myristoylated); this interaction is required for binding of COPB1 to Golgi membranes. Interacts with STX17. Interacts with TMEM115. Interacts with HLA-G-B2M complex; this interaction mediates the endoplasmic reticulum (ER) retrieval of HLA-E-B2M complexes that bind low affinity peptides. Interacts with TMEM41B. As to quaternary structure, (Microbial infection) Interacts (via C-terminus) with HIV-1 Nef; the interaction is direct. Proteolytically cleaved between Ser-528 and Ser-529 by CAPN8.

The protein resides in the cytoplasm. The protein localises to the golgi apparatus membrane. It localises to the cytoplasmic vesicle. It is found in the COPI-coated vesicle membrane. Its subcellular location is the cell membrane. The protein resides in the endoplasmic reticulum-Golgi intermediate compartment. The coatomer is a cytosolic protein complex that binds to dilysine motifs and reversibly associates with Golgi non-clathrin-coated vesicles, which further mediate biosynthetic protein transport from the ER, via the Golgi up to the trans Golgi network. Coatomer complex is required for budding from Golgi membranes, and is essential for the retrograde Golgi-to-ER transport of dilysine-tagged proteins. In mammals, the coatomer can only be recruited by membranes associated to ADP-ribosylation factors (ARFs), which are small GTP-binding proteins; the complex also influences the Golgi structural integrity, as well as the processing, activity, and endocytic recycling of LDL receptors. Plays a functional role in facilitating the transport of kappa-type opioid receptor mRNAs into axons and enhances translation of these proteins. Required for limiting lipid storage in lipid droplets. Involved in lipid homeostasis by regulating the presence of perilipin family members PLIN2 and PLIN3 at the lipid droplet surface and promoting the association of adipocyte surface triglyceride lipase (PNPLA2) with the lipid droplet to mediate lipolysis. Involved in the Golgi disassembly and reassembly processes during cell cycle. Involved in autophagy by playing a role in early endosome function. Plays a role in organellar compartmentalization of secretory compartments including endoplasmic reticulum (ER)-Golgi intermediate compartment (ERGIC), Golgi, trans-Golgi network (TGN) and recycling endosomes, and in biosynthetic transport of CAV1. Promotes degradation of Nef cellular targets CD4 and MHC class I antigens by facilitating their trafficking to degradative compartments. The polypeptide is Coatomer subunit beta (Homo sapiens (Human)).